The sequence spans 366 residues: Probable quinol oxidase subunit 2 (366 aa).

Residues 1–19 (MSKFKSLLLLFGTLILLSG) form the signal peptide. Cys-20 carries the N-palmitoyl cysteine lipid modification. Residue Cys-20 is the site of S-diacylglycerol cysteine attachment. 2 helical membrane-spanning segments follow: residues 38-58 (FLILYSIVFMLVICFVVLGMF) and 80-100 (AIIETIWFVIPIIIVAALAIP). Residues 330–366 (EPYNNEFKKDESKNAKEMKKISKDAQDQDNDDHGGGH) are disordered. Residues 335 to 366 (EFKKDESKNAKEMKKISKDAQDQDNDDHGGGH) show a composition bias toward basic and acidic residues.

The protein belongs to the cytochrome c oxidase subunit 2 family.

The protein resides in the cell membrane. It catalyses the reaction 2 a quinol + O2 = 2 a quinone + 2 H2O. In terms of biological role, catalyzes quinol oxidation with the concomitant reduction of oxygen to water. Subunit II transfers the electrons from a quinol to the binuclear center of the catalytic subunit I. The sequence is that of Probable quinol oxidase subunit 2 (qoxA) from Staphylococcus aureus (strain bovine RF122 / ET3-1).